Here is a 741-residue protein sequence, read N- to C-terminus: Probable basic-leucine zipper transcription factor I (741 aa).

Positions 77 to 117 (QIIEQIQFLQQQQQQQHDQIQQQLHNFQQQYQQQYQQRQQQ) form a coiled coil. Composition is skewed to low complexity over residues 153-164 (QQPPQSLQQQQQ), 172-237 (PQQQ…QIQK), 277-290 (IQQQ…IQQK), and 381-390 (QQQQQQQQQQ). Disordered stretches follow at residues 153–237 (QQPP…QIQK), 277–305 (IQQQ…SNSM), and 349–390 (KQKE…QQQQ). The bZIP domain maps to 429–492 (ESKKSIKRIN…HEGGTMAILK (64 aa)). A basic motif region spans residues 431–432 (KK). Positions 434-441 (IKRINQNI) are leucine-zipper.

This sequence belongs to the bZIP family.

It is found in the nucleus. Probable transcriptional regulator. The polypeptide is Probable basic-leucine zipper transcription factor I (bzpI) (Dictyostelium discoideum (Social amoeba)).